The chain runs to 151 residues: D-aminoacyl-tRNA deacylase (151 aa).

The Gly-cisPro motif, important for rejection of L-amino acids signature appears at 137 to 138; the sequence is GP.

It belongs to the DTD family. As to quaternary structure, homodimer.

The protein resides in the cytoplasm. It carries out the reaction glycyl-tRNA(Ala) + H2O = tRNA(Ala) + glycine + H(+). It catalyses the reaction a D-aminoacyl-tRNA + H2O = a tRNA + a D-alpha-amino acid + H(+). Its function is as follows. An aminoacyl-tRNA editing enzyme that deacylates mischarged D-aminoacyl-tRNAs. Also deacylates mischarged glycyl-tRNA(Ala), protecting cells against glycine mischarging by AlaRS. Acts via tRNA-based rather than protein-based catalysis; rejects L-amino acids rather than detecting D-amino acids in the active site. By recycling D-aminoacyl-tRNA to D-amino acids and free tRNA molecules, this enzyme counteracts the toxicity associated with the formation of D-aminoacyl-tRNA entities in vivo and helps enforce protein L-homochirality. This is D-aminoacyl-tRNA deacylase from Geobacter metallireducens (strain ATCC 53774 / DSM 7210 / GS-15).